Reading from the N-terminus, the 203-residue chain is Probable deoxycytidylate deaminase (203 aa).

The CMP/dCMP-type deaminase domain maps to 27 to 163; that stretch reads HWDDYFMATS…PTYRASKRML (137 aa). Residue His-102 participates in Zn(2+) binding. The Proton donor role is filled by Glu-104. Zn(2+) contacts are provided by Cys-128 and Cys-131.

This sequence belongs to the cytidine and deoxycytidylate deaminase family. Zn(2+) serves as cofactor.

It catalyses the reaction dCMP + H2O + H(+) = dUMP + NH4(+). Supplies the nucleotide substrate for thymidylate synthetase. This is Probable deoxycytidylate deaminase from Drosophila melanogaster (Fruit fly).